A 354-amino-acid chain; its full sequence is CX3C chemokine receptor 1 (354 aa).

Over 1-32 (MPTSFPELDLENFEYDDSAEACYLGDIVAFGT) the chain is Extracellular. The helical transmembrane segment at 33-60 (IFLSIFYSLVFTFGLVGNLLVVLALTNS) threads the bilayer. Residues 61–70 (RKSKSITDIY) lie on the Cytoplasmic side of the membrane. A helical transmembrane segment spans residues 71–91 (LLNLALSDLLFVATLPFWTHY). Residues 92 to 104 (LISHEGLHNAMCK) lie on the Extracellular side of the membrane. A disulfide bridge connects residues Cys-103 and Cys-176. A helical transmembrane segment spans residues 105–126 (LTTAFFFIGFFGGIFFITVISI). Residues 127 to 143 (DRYLAIVLAANSMNNRT) lie on the Cytoplasmic side of the membrane. A helical transmembrane segment spans residues 144–168 (VQHGVTISLGVWAAAILVASPQFMF). The Extracellular segment spans residues 169–196 (TKRKDNECLGDYPEVLQEIWPVLRNSEV). Residues 197-216 (NILGFVLPLLIMSFCYFRIV) traverse the membrane as a helical segment. Residues 217-232 (RTLFSCKNRKKARAIR) are Cytoplasmic-facing. Residues 233–257 (LILLVVVVFFLFWTPYNIVIFLETL) form a helical membrane-spanning segment. Residues 258–274 (KFYNFFPSCGMKRDLRW) lie on the Extracellular side of the membrane. A helical membrane pass occupies residues 275–298 (ALSVTETVAFSHCCLNPFIYAFAG). Residues 299-354 (EKFRRYLRHLYNKCLAVLCGRPVHAGFSTESQRSRQDSILSSLTHYTSEGEGSLLL) lie on the Cytoplasmic side of the membrane. Thr-345 carries the phosphothreonine modification.

Belongs to the G-protein coupled receptor 1 family. As to quaternary structure, found in a ternary complex with CX3CL1 and ITGAV:ITGB3 or ITGA4:ITGB1. Post-translationally, this protein is not N-glycosylated which is unusual for G-protein-coupled receptors. As to expression, most abundant in adult spinal cord, brain, kidney, gut, uterus and testes.

It localises to the cell membrane. Functionally, receptor for the C-X3-C chemokine fractalkine (CX3CL1) present on many early leukocyte cells; CX3CR1-CX3CL1 signaling exerts distinct functions in different tissue compartments, such as immune response, inflammation, cell adhesion and chemotaxis. CX3CR1-CX3CL1 signaling mediates cell migratory functions. Responsible for the recruitment of natural killer (NK) cells to inflamed tissues. Acts as a regulator of inflammation process leading to atherogenesis by mediating macrophage and monocyte recruitment to inflamed atherosclerotic plaques, promoting cell survival. Involved in airway inflammation by promoting interleukin 2-producing T helper (Th2) cell survival in inflamed lung. Involved in the migration of circulating monocytes to non-inflamed tissues, where they differentiate into macrophages and dendritic cells. Acts as a negative regulator of angiogenesis, probably by promoting macrophage chemotaxis. Plays a key role in brain microglia by regulating inflammatory response in the central nervous system (CNS) and regulating synapse maturation. Required to restrain the microglial inflammatory response in the CNS and the resulting parenchymal damage in response to pathological stimuli. Involved in brain development by participating in synaptic pruning, a natural process during which brain microglia eliminates extra synapses during postnatal development. Synaptic pruning by microglia is required to promote the maturation of circuit connectivity during brain development. Acts as an important regulator of the gut microbiota by controlling immunity to intestinal bacteria and fungi. Expressed in lamina propria dendritic cells in the small intestine, which form transepithelial dendrites capable of taking up bacteria in order to provide defense against pathogenic bacteria. Required to initiate innate and adaptive immune responses against dissemination of commensal fungi (mycobiota) component of the gut: expressed in mononuclear phagocytes (MNPs) and acts by promoting induction of antifungal IgG antibodies response to confer protection against disseminated C.albicans or C.auris infection. Also acts as a receptor for C-C motif chemokine CCL26, inducing cell chemotaxis. The chain is CX3C chemokine receptor 1 from Rattus norvegicus (Rat).